The sequence spans 214 residues: Transcriptional regulatory protein ComA (214 aa).

The Response regulatory domain maps to 3–121; sequence KILVIDDHPA…KITQYIYHVL (119 aa). 4-aspartylphosphate is present on D55. The region spanning 147 to 212 is the HTH luxR-type domain; the sequence is SQKEQDVLTP…EAVLIAKSDG (66 aa). The H-T-H motif DNA-binding region spans 171 to 190; sequence NQEIADALHLSKRSIEYSLT.

Phosphorylated by ComP.

Its subcellular location is the cytoplasm. Its function is as follows. Response regulator in the two-component regulatory system ComP/ComA involved in a major quorum response pathway that regulates the development of genetic competence. Regulates directly the expression of over 20 genes, including genes of the srfA operon, degQ, rapA, rapC, rapE, rapF, etc. Regulates indirectly, through the regulation of comK transcription, the expression of late competence genes. The polypeptide is Transcriptional regulatory protein ComA (comA) (Bacillus subtilis (strain 168)).